Reading from the N-terminus, the 354-residue chain is Mitogen-activated protein kinase kinase 1 (354 aa).

One can recognise a Protein kinase domain in the interval 68–328 (LEVIKVIGKG…AKELLEHKFV (261 aa)). Residues 74–82 (IGKGSSGNV) and lysine 97 contribute to the ATP site. The active-site Proton acceptor is aspartate 190. Residue threonine 218 is modified to Phosphothreonine. The residue at position 224 (serine 224) is a Phosphoserine. Threonine 228 is subject to Phosphothreonine.

The protein belongs to the protein kinase superfamily. STE Ser/Thr protein kinase family. MAP kinase kinase subfamily. As to quaternary structure, interacts with MEKK1 and MPK4. May form a ternary complex composed of MEKK1 and MKK1/MKK2 and MPK4. Interacts with P.syringae type III effector HopF2. Interacts with MPK11. Post-translationally, phosphorylation at Thr-218 and Ser-224 by MAP kinase kinase kinases positively regulates kinase activity. As to expression, expressed in roots, stem, flowers and siliques.

It carries out the reaction L-seryl-[protein] + ATP = O-phospho-L-seryl-[protein] + ADP + H(+). It catalyses the reaction L-threonyl-[protein] + ATP = O-phospho-L-threonyl-[protein] + ADP + H(+). The enzyme catalyses L-tyrosyl-[protein] + ATP = O-phospho-L-tyrosyl-[protein] + ADP + H(+). With respect to regulation, activated through serine and threonine phosphorylation in response to wounding, cold, drought, salt stresses, abscisic acid (ABA), hydrogen peroxide, bacterial flagellin and laminarin beta-glucan. Its function is as follows. MEKK1, MKK1/MKK2 and MPK4/MPK6 function in a signaling pathway that modulates the expression of genes responding to biotic and abiotic stresses and also plays an important role in pathogen defense by negatively regulating innate immunity. Activates by phosphorylation the downstream MPK4. Acts redundantly with MKK2. MKK1-MPK6 module mediates abscisic acid (ABA)-dependent CAT1 expression with H(2)O(2) production and response to drought and salt stress. MKK1-MPK6 module is also involved in sugar signaling during the process of seed germination. In Arabidopsis thaliana (Mouse-ear cress), this protein is Mitogen-activated protein kinase kinase 1 (MKK1).